The sequence spans 296 residues: NAD kinase (296 aa).

Asp72 functions as the Proton acceptor in the catalytic mechanism. NAD(+) is bound by residues 72-73 (DG), 146-147 (ND), Arg157, Lys174, Asp176, 187-192 (TAYALS), and Gln247.

It belongs to the NAD kinase family. The cofactor is a divalent metal cation.

The protein localises to the cytoplasm. The catalysed reaction is NAD(+) + ATP = ADP + NADP(+) + H(+). Its function is as follows. Involved in the regulation of the intracellular balance of NAD and NADP, and is a key enzyme in the biosynthesis of NADP. Catalyzes specifically the phosphorylation on 2'-hydroxyl of the adenosine moiety of NAD to yield NADP. The sequence is that of NAD kinase from Pseudomonas putida (strain GB-1).